Here is a 157-residue protein sequence, read N- to C-terminus: UPF0225 protein PSPTO_4127 (157 aa).

It belongs to the UPF0225 family.

The polypeptide is UPF0225 protein PSPTO_4127 (Pseudomonas syringae pv. tomato (strain ATCC BAA-871 / DC3000)).